We begin with the raw amino-acid sequence, 628 residues long: NUAK family SNF1-like kinase 2 (628 aa).

At methionine 1 the chain carries N-acetylmethionine. Positions tyrosine 53–valine 303 constitute a Protein kinase domain. ATP is bound by residues leucine 59–valine 67 and lysine 81. Aspartate 175 serves as the catalytic Proton acceptor. Threonine 208 is modified (phosphothreonine). 2 disordered regions span residues lysine 355–serine 492 and glycine 522–glycine 570. Pro residues predominate over residues glutamate 428–proline 444. Serine 435 carries the phosphoserine modification. The span at serine 457–glycine 469 shows a compositional bias: low complexity. Phosphoserine occurs at positions 523, 544, 547, and 573.

This sequence belongs to the protein kinase superfamily. CAMK Ser/Thr protein kinase family. SNF1 subfamily. The cofactor is Mg(2+). Phosphorylated at Thr-208 by STK11/LKB1 in complex with STE20-related adapter-alpha (STRADA) pseudo kinase and CAB39. Autophosphorylation is also possible at Thr-208.

It catalyses the reaction L-seryl-[protein] + ATP = O-phospho-L-seryl-[protein] + ADP + H(+). It carries out the reaction L-threonyl-[protein] + ATP = O-phospho-L-threonyl-[protein] + ADP + H(+). With respect to regulation, activated by phosphorylation on Thr-208. Functionally, stress-activated kinase involved in tolerance to glucose starvation. Induces cell-cell detachment by increasing F-actin conversion to G-actin. Expression is induced by CD95 or TNF-alpha, via NF-kappa-B. Protects cells from CD95-mediated apoptosis and is required for the increased motility and invasiveness of CD95-activated tumor cells. Phosphorylates LATS1 and LATS2. Plays a key role in neural tube closure during embryonic development through LATS2 phosphorylation and regulation of the nuclear localization of YAP1 a critical downstream regulatory target in the Hippo signaling pathway. The sequence is that of NUAK family SNF1-like kinase 2 from Pongo abelii (Sumatran orangutan).